Reading from the N-terminus, the 785-residue chain is MAAPVSEPTVARQKLLALLGQVQTYVFQIELLRRCDPHIGRGKLPQLKLNALQVRALRRRLRPGLEAQAGAFLTPLSVTLELLLEYAWREGERLLGSLETFATAGDVAAFFTETMGLARPCPYHQRVRLDTYGGTVHMELCFLHDVENFLKQLNYCHLITPSRGATAALERVREFMVGAVGSGLIVPPELSDPSHPCAVCFEELCVTANQGATIARRLADRICNHVTQQAQVRLDANELRRYLPHAAGLSDADRARALSVLDHALARTAGGDGQPHPSPENDSVRKEADALLEAHDVFQATTPGLYAISELRFWLASGDRAGQTTMDAFASNLTALARRELQQETAAVAVELALFGRRAEHFDRAFGSHLAALDMVDALIIGGQATSPDDQIEALIRACYDHHLTTPLLRRLVSPEQCDEEALRRVLARMGAGGAADAPKGGAGPDDDGDRVAVEEGARGLGAPGGGGEDEDRRRGPGGQGPETWGDIATQAAADVRERRRLYADRLTKRSLASLGRCVREQRGELEKMLRVSVHGEVLPATFAAVANGFAARARFCALTAGAGTVIDNRSAPGVFDAHRFMRASLLRHQVDPALLPSITHRFFELVNGPLFDHSTHSFAQPPNTALYYSVENVGLLPHLKEELARFIMGAGGSGADWAVSEFQRFYCFDGISGITPTQRAAWRYIRELIIATTLFASVYRCGELELRRPDCSRPTSEGRYRYPPGVYLTYDSDCPLVAIVESAPDGCIGPRSVVVYDRDVFSILYSVLQHLAPRLPDGGHDGPP.

The C3H1-type zinc-finger motif lies at 197-225 (CAVCFEELCVTANQGATIARRLADRICNH). Disordered stretches follow at residues 433-452 (GGAA…GDRV) and 457-489 (GARG…GDIA). Residue 696–703 (FASVYRCG) participates in ATP binding.

The protein belongs to the herpesviridae TRM1 protein family. As to quaternary structure, associates with TRM2 and TRM3 to form the tripartite terminase complex. Interacts with portal protein.

The protein resides in the host nucleus. Component of the molecular motor that translocates viral genomic DNA in empty capsid during DNA packaging. Forms a tripartite terminase complex together with TRM2 and TRM3 in the host cytoplasm. Once the complex reaches the host nucleus, it interacts with the capsid portal vertex. This portal forms a ring in which genomic DNA is translocated into the capsid. TRM1 carries an endonuclease activity that plays an important role for the cleavage of concatemeric viral DNA into unit length genomes. The protein is Tripartite terminase subunit 1 of Human herpesvirus 1 (strain 17) (HHV-1).